We begin with the raw amino-acid sequence, 409 residues long: Arginine deiminase (409 aa).

The active-site Amidino-cysteine intermediate is C399.

The protein belongs to the arginine deiminase family.

It localises to the cytoplasm. The catalysed reaction is L-arginine + H2O = L-citrulline + NH4(+). The protein operates within amino-acid degradation; L-arginine degradation via ADI pathway; carbamoyl phosphate from L-arginine: step 1/2. The protein is Arginine deiminase of Streptococcus gordonii (strain Challis / ATCC 35105 / BCRC 15272 / CH1 / DL1 / V288).